A 173-amino-acid polypeptide reads, in one-letter code: Pyrimidine operon regulatory protein (173 aa).

Residues 40–41 (TR), 97–105 (DDVLYTGRT), and arginine 130 each bind substrate. Positions 93 to 105 (VILVDDVLYTGRT) match the PRPP-binding motif.

It belongs to the purine/pyrimidine phosphoribosyltransferase family. PyrR subfamily.

Functionally, regulates transcriptional attenuation of the pyrimidine nucleotide (pyr) operon in response to exogenous pyrimidines, probably by binding to specific sites on pyr mRNA. This probably disrupts an antiterminator hairpin in the RNA and favors formation of a downstream transcription terminator, leading to a reduced expression of downstream genes. In Lactococcus lactis subsp. lactis (strain IL1403) (Streptococcus lactis), this protein is Pyrimidine operon regulatory protein.